Reading from the N-terminus, the 630-residue chain is MSQLSAPGAENTRRLLAMALGSVGVVYGDIGTSPLYAFREALRPVSHDGVTDVEIVGLISLMIWALTIIVTIKYVLFLLRADNQGEGGTLSLLALLMKTANGHTAILFFMGIAGAALFIGDAMITPALSVLSAVEGLKLVTPALSDYVVPIAVVILLFLFAVQSKGTAAVSKFFGPITLVWFLVMGAVGFMHIADDLSIFRAFNPYYAVAFLFNEGYVGIVVLGAVFLTVTGAEALYADLGHFGRRPIQWAWFTVVFPALTLNYLGQGAFVLKNPEAMSDPFFLMFPKWALLPAVILATAATIIASQAVITGAFSLTRQAIHLGFLPRMAIFHTSETHTGQIYLPNVNTLLMFGVMALVFIFGSSESLATAYGISVTGAMVVTTVLAFEFLRMRWNWPAWWAAGVLLPLFALELVFLGANMLKIHDGGYVPILIAATFIVIMWTWKRGTAILHTKTRHIDIPLERFIKSIERQSEHAPVSVPGTAIFLTSDPESTPAALLHNIKHNHVLHQQNFILTIRTANTPKVPREERVSARRLSERFTLMEVRFGFMETQNVSQALGLFRKSGLKFDIMSTSFYLGRRKLVPDAQSGMPHWQDRLFIALANAAIDPSDYFRLPTNRVVELGSHVII.

12 helical membrane passes run 15 to 35 (LLAM…TSPL), 58 to 78 (LISL…VLFL), 104 to 124 (TAIL…DAMI), 142 to 162 (PALS…LFAV), 173 to 193 (FFGP…FMHI), 208 to 228 (AVAF…AVFL), 252 to 272 (WFTV…AFVL), 290 to 310 (ALLP…QAVI), 342 to 362 (IYLP…VFIF), 368 to 388 (LATA…VLAF), 399 to 419 (AWWA…FLGA), and 424 to 444 (IHDG…IMWT).

The protein belongs to the HAK/KUP transporter (TC 2.A.72) family.

Its subcellular location is the cell inner membrane. The enzyme catalyses K(+)(in) + H(+)(in) = K(+)(out) + H(+)(out). In terms of biological role, transport of potassium into the cell. Likely operates as a K(+):H(+) symporter. This Sinorhizobium medicae (strain WSM419) (Ensifer medicae) protein is Probable potassium transport system protein Kup 1.